The following is a 352-amino-acid chain: Histidine biosynthesis bifunctional protein HisB (352 aa).

The segment at 1–164 is histidinol-phosphatase; that stretch reads MSQKILFIDR…EIENEILSSF (164 aa). Catalysis depends on Asp-9, which acts as the Nucleophile. Mg(2+) is bound by residues Asp-9 and Asp-11. Asp-11 serves as the catalytic Proton donor. Zn(2+) is bound by residues Cys-93, His-95, Cys-101, and Cys-103. Asp-130 is a Mg(2+) binding site. Residues 165–352 are imidazoleglycerol-phosphate dehydratase; it reads RSASYQRTTK…ENLASSKGVI (188 aa).

The protein in the N-terminal section; belongs to the histidinol-phosphatase family. It in the C-terminal section; belongs to the imidazoleglycerol-phosphate dehydratase family. Requires Mg(2+) as cofactor. Zn(2+) is required as a cofactor.

The protein localises to the cytoplasm. The enzyme catalyses D-erythro-1-(imidazol-4-yl)glycerol 3-phosphate = 3-(imidazol-4-yl)-2-oxopropyl phosphate + H2O. It catalyses the reaction L-histidinol phosphate + H2O = L-histidinol + phosphate. It participates in amino-acid biosynthesis; L-histidine biosynthesis; L-histidine from 5-phospho-alpha-D-ribose 1-diphosphate: step 6/9. It functions in the pathway amino-acid biosynthesis; L-histidine biosynthesis; L-histidine from 5-phospho-alpha-D-ribose 1-diphosphate: step 8/9. This Campylobacter jejuni subsp. doylei (strain ATCC BAA-1458 / RM4099 / 269.97) protein is Histidine biosynthesis bifunctional protein HisB.